A 209-amino-acid chain; its full sequence is MTIEIPPTQGVLLAGGLARRMGGGDKPMRTIGGSTILERVIARLKPQCDGIILNANGDPGRFAMFGLTVVADNVPDFPGPLAGILAALDWTATNRPGVEWVLSAAADCPFLPRDLVMRLHQGRAEEKAQLAVAVSGEQSHPVIGLWHVGLREELRRALVKDDIRKIDRWTACYRLAAVSWPTEPLDPFFNANTVEDIAEAERLAALDGG.

Residues 13–15, K26, N54, D72, and D107 each bind GTP; that span reads LAG. D107 serves as a coordination point for Mg(2+).

It belongs to the MobA family. In terms of assembly, monomer. Requires Mg(2+) as cofactor.

The protein resides in the cytoplasm. The catalysed reaction is Mo-molybdopterin + GTP + H(+) = Mo-molybdopterin guanine dinucleotide + diphosphate. Transfers a GMP moiety from GTP to Mo-molybdopterin (Mo-MPT) cofactor (Moco or molybdenum cofactor) to form Mo-molybdopterin guanine dinucleotide (Mo-MGD) cofactor. The polypeptide is Molybdenum cofactor guanylyltransferase (Nitrobacter hamburgensis (strain DSM 10229 / NCIMB 13809 / X14)).